We begin with the raw amino-acid sequence, 242 residues long: MLCCMRRTKQVEKNDEDQKIEQDGIKPEDKAHKAATKIQASFRGHITRKKLKGEKKGDAPAAEAEANEKDEAAVAEGTEKKEGEGSTPAEAAPGAGPKPEEKTGKAGETPSEEKKGEGAPDAATEQAAPQAPAPSEEKAGSAETESATKASTDNSPSSKAEDAPAKEEPKQADVPAAVTAAAATAPAAEDAAAMATAQPPTETAESSQAEEKIEAVDETKPKDSARQDEGKGEEREADQEHA.

The disordered stretch occupies residues 1 to 242; sequence MLCCMRRTKQ…EEREADQEHA (242 aa). 2 S-palmitoyl cysteine lipidation sites follow: cysteine 3 and cysteine 4. A compositionally biased stretch (basic and acidic residues) spans 9–32; that stretch reads KQVEKNDEDQKIEQDGIKPEDKAH. One can recognise an IQ domain in the interval 31–60; sequence AHKAATKIQASFRGHITRKKLKGEKKGDAP. A Phosphoserine; by PHK and PKC modification is found at serine 41. A compositionally biased stretch (basic and acidic residues) spans 66–84; that stretch reads ANEKDEAAVAEGTEKKEGE. A compositionally biased stretch (low complexity) spans 85–97; sequence GSTPAEAAPGAGP. Residue serine 86 is modified to Phosphoserine. The span at 98–118 shows a compositional bias: basic and acidic residues; sequence KPEEKTGKAGETPSEEKKGEG. A compositionally biased stretch (low complexity) spans 119–134; sequence APDAATEQAAPQAPAP. Over residues 143–158 the composition is skewed to polar residues; that stretch reads ETESATKASTDNSPSS. 3 positions are modified to phosphoserine: serine 155, serine 157, and serine 158. Residues 159–171 are compositionally biased toward basic and acidic residues; it reads KAEDAPAKEEPKQ. Over residues 172-204 the composition is skewed to low complexity; it reads ADVPAAVTAAAATAPAAEDAAAMATAQPPTETA. Phosphoserine; by CK2 occurs at positions 206 and 207. Basic and acidic residues predominate over residues 209-242; the sequence is AEEKIEAVDETKPKDSARQDEGKGEEREADQEHA.

Belongs to the neuromodulin family. As to quaternary structure, identified in a complex containing FGFR4, NCAM1, CDH2, PLCG1, FRS2, SRC, SHC1, GAP43 and CTTN. Interacts (via IQ domain) with calmodulin. Binds calmodulin with a greater affinity in the absence of Ca(2+) than in its presence. In terms of processing, phosphorylated. Phosphorylation of this protein by a protein kinase C is specifically correlated with certain forms of synaptic plasticity. Palmitoylated by ZDHHC3. Palmitoylation is regulated by ARF6 and is essential for plasma membrane association and axonal and dendritic filopodia induction. Deacylated by LYPLA2.

It is found in the cell membrane. The protein localises to the cell projection. It localises to the growth cone membrane. Its subcellular location is the synapse. The protein resides in the filopodium membrane. It is found in the perikaryon. The protein localises to the dendrite. It localises to the axon. Its subcellular location is the cytoplasm. Functionally, this protein is associated with nerve growth. It is a major component of the motile 'growth cones' that form the tips of elongating axons. Plays a role in axonal and dendritic filopodia induction. The polypeptide is Neuromodulin (GAP43) (Bos taurus (Bovine)).